The chain runs to 220 residues: Ribonuclease P protein component 3 (220 aa).

This sequence belongs to the eukaryotic/archaeal RNase P protein component 3 family. Consists of a catalytic RNA component and at least 4-5 protein subunits.

The protein resides in the cytoplasm. The enzyme catalyses Endonucleolytic cleavage of RNA, removing 5'-extranucleotides from tRNA precursor.. In terms of biological role, part of ribonuclease P, a protein complex that generates mature tRNA molecules by cleaving their 5'-ends. This Thermococcus kodakarensis (strain ATCC BAA-918 / JCM 12380 / KOD1) (Pyrococcus kodakaraensis (strain KOD1)) protein is Ribonuclease P protein component 3.